A 1715-amino-acid polypeptide reads, in one-letter code: Pentafunctional AROM polypeptide (1715 aa).

Residues 1 to 17 (MTSTASAQQPVLRTKTP) are compositionally biased toward polar residues. The tract at residues 1–26 (MTSTASAQQPVLRTKTPSYHAPPSTD) is disordered. Residues 1-421 (MTSTASAQQP…VQNMASTVSD (421 aa)) are 3-dehydroquinate synthase. NAD(+) is bound by residues 71–73 (DQN), 112–115 (EASK), 143–145 (GGV), and aspartate 148. 7-phospho-2-dehydro-3-deoxy-D-arabino-heptonate is bound at residue arginine 159. NAD(+) is bound at residue 168-169 (TT). The 7-phospho-2-dehydro-3-deoxy-D-arabino-heptonate site is built by aspartate 175 and lysine 181. Lysine 190 contacts NAD(+). Asparagine 191 provides a ligand contact to 7-phospho-2-dehydro-3-deoxy-D-arabino-heptonate. NAD(+) is bound by residues 208 to 211 (WLKT) and asparagine 219. A Zn(2+)-binding site is contributed by glutamate 223. Residues 223–226 (EVVK) and lysine 287 contribute to the 7-phospho-2-dehydro-3-deoxy-D-arabino-heptonate site. The active-site Proton acceptor; for 3-dehydroquinate synthase activity is glutamate 297. 7-phospho-2-dehydro-3-deoxy-D-arabino-heptonate is bound by residues 301-305 (RNLVN) and histidine 308. Residue histidine 308 coordinates Zn(2+). Histidine 312 functions as the Proton acceptor; for 3-dehydroquinate synthase activity in the catalytic mechanism. 7-phospho-2-dehydro-3-deoxy-D-arabino-heptonate is bound by residues histidine 324 and lysine 393. Histidine 324 contacts Zn(2+). The interval 434–895 (VTPIHEQPNK…WDDLERKLGI (462 aa)) is EPSP synthase. Catalysis depends on cysteine 877, which acts as the For EPSP synthase activity. The shikimate kinase stretch occupies residues 948-1165 (HATIICIGMR…KGGRRTYFLS (218 aa)). 955-962 (GMRASGKT) contributes to the ATP binding site. Residues 1166-1389 (LTFPDVVPKL…AAPGQLSFRQ (224 aa)) are 3-dehydroquinase. Histidine 1292 (proton acceptor; for 3-dehydroquinate dehydratase activity) is an active-site residue. Lysine 1320 serves as the catalytic Schiff-base intermediate with substrate; for 3-dehydroquinate dehydratase activity. Positions 1402 to 1715 (ARRFALFGSP…AAWDVYLQRC (314 aa)) are shikimate dehydrogenase.

The protein in the N-terminal section; belongs to the sugar phosphate cyclases superfamily. Dehydroquinate synthase family. This sequence in the 2nd section; belongs to the EPSP synthase family. It in the 3rd section; belongs to the shikimate kinase family. In the 4th section; belongs to the type-I 3-dehydroquinase family. The protein in the C-terminal section; belongs to the shikimate dehydrogenase family. As to quaternary structure, homodimer. Requires Zn(2+) as cofactor.

It is found in the cytoplasm. It carries out the reaction 7-phospho-2-dehydro-3-deoxy-D-arabino-heptonate = 3-dehydroquinate + phosphate. The catalysed reaction is 3-dehydroquinate = 3-dehydroshikimate + H2O. It catalyses the reaction shikimate + NADP(+) = 3-dehydroshikimate + NADPH + H(+). The enzyme catalyses shikimate + ATP = 3-phosphoshikimate + ADP + H(+). It carries out the reaction 3-phosphoshikimate + phosphoenolpyruvate = 5-O-(1-carboxyvinyl)-3-phosphoshikimate + phosphate. The protein operates within metabolic intermediate biosynthesis; chorismate biosynthesis; chorismate from D-erythrose 4-phosphate and phosphoenolpyruvate: step 2/7. It functions in the pathway metabolic intermediate biosynthesis; chorismate biosynthesis; chorismate from D-erythrose 4-phosphate and phosphoenolpyruvate: step 3/7. It participates in metabolic intermediate biosynthesis; chorismate biosynthesis; chorismate from D-erythrose 4-phosphate and phosphoenolpyruvate: step 4/7. Its pathway is metabolic intermediate biosynthesis; chorismate biosynthesis; chorismate from D-erythrose 4-phosphate and phosphoenolpyruvate: step 5/7. The protein operates within metabolic intermediate biosynthesis; chorismate biosynthesis; chorismate from D-erythrose 4-phosphate and phosphoenolpyruvate: step 6/7. Functionally, the AROM polypeptide catalyzes 5 consecutive enzymatic reactions in prechorismate polyaromatic amino acid biosynthesis. This Mycosarcoma maydis (Corn smut fungus) protein is Pentafunctional AROM polypeptide.